We begin with the raw amino-acid sequence, 68 residues long: MDRFLIKLIKIYKKFVSPALPNSCRYYPTCSSYAIQSIEKYGALKGSLKAVWRILRCNPFSKGGVDYP.

The protein belongs to the UPF0161 family.

The protein resides in the cell inner membrane. Could be involved in insertion of integral membrane proteins into the membrane. The sequence is that of Putative membrane protein insertion efficiency factor from Persephonella marina (strain DSM 14350 / EX-H1).